Here is a 501-residue protein sequence, read N- to C-terminus: Aldehyde dehydrogenase 1A1 (501 aa).

At S2 the chain carries N-acetylserine. N6-acetyllysine is present on residues K91 and K128. Residues 167-170 (LPWN), 193-196 (KPAE), 226-227 (GP), and 246-247 (GS) each bind NAD(+). K252 is subject to N6-acetyllysine. Residue E269 is the Proton acceptor of the active site. Residue 269–271 (ELG) coordinates NAD(+). The Nucleophile role is filled by C303. A mediates interaction with PRMT3 region spans residues 336-501 (LTPGVSQGPQ…VTVKISQKNS (166 aa)). Residue T337 is modified to Phosphothreonine. Position 349 to 353 (349 to 353 (EQYDK)) interacts with NAD(+). N6-acetyllysine is present on residues K353 and K367. 400–402 (EIF) is an NAD(+) binding site. Residue K410 is modified to N6-acetyllysine. S413 is modified (phosphoserine). N6-acetyllysine occurs at positions 419, 435, and 495.

The protein belongs to the aldehyde dehydrogenase family. In terms of assembly, homotetramer. Interacts with PRMT3; the interaction is direct, inhibits ALDH1A1 aldehyde dehydrogenase activity and is independent of the methyltransferase activity of PRMT3. In terms of processing, the N-terminus is blocked most probably by acetylation.

Its subcellular location is the cytoplasm. The protein resides in the cytosol. It is found in the cell projection. It localises to the axon. The enzyme catalyses an aldehyde + NAD(+) + H2O = a carboxylate + NADH + 2 H(+). It catalyses the reaction all-trans-retinal + NAD(+) + H2O = all-trans-retinoate + NADH + 2 H(+). It carries out the reaction 9-cis-retinal + NAD(+) + H2O = 9-cis-retinoate + NADH + 2 H(+). The catalysed reaction is 11-cis-retinal + NAD(+) + H2O = 11-cis-retinoate + NADH + 2 H(+). The enzyme catalyses 13-cis-retinal + NAD(+) + H2O = 13-cis-retinoate + NADH + 2 H(+). It catalyses the reaction 3-deoxyglucosone + NAD(+) + H2O = 2-dehydro-3-deoxy-D-gluconate + NADH + 2 H(+). It carries out the reaction (E)-4-hydroxynon-2-enal + NAD(+) + H2O = (E)-4-hydroxynon-2-enoate + NADH + 2 H(+). The catalysed reaction is malonaldehyde + NAD(+) + H2O = 3-oxopropanoate + NADH + 2 H(+). The enzyme catalyses hexanal + NAD(+) + H2O = hexanoate + NADH + 2 H(+). It catalyses the reaction propanal + NAD(+) + H2O = propanoate + NADH + 2 H(+). It carries out the reaction acetaldehyde + NAD(+) + H2O = acetate + NADH + 2 H(+). The catalysed reaction is benzaldehyde + NAD(+) + H2O = benzoate + NADH + 2 H(+). The enzyme catalyses 4-aminobutanal + NAD(+) + H2O = 4-aminobutanoate + NADH + 2 H(+). It participates in cofactor metabolism; retinol metabolism. Its function is as follows. Cytosolic dehydrogenase that catalyzes the irreversible oxidation of a wide range of aldehydes to their corresponding carboxylic acid. Functions downstream of retinol dehydrogenases and catalyzes the oxidation of retinaldehyde into retinoic acid, the second step in the oxidation of retinol/vitamin A into retinoic acid. This pathway is crucial to control the levels of retinol and retinoic acid, two important molecules which excess can be teratogenic and cytotoxic. Also oxidizes aldehydes resulting from lipid peroxidation like (E)-4-hydroxynon-2-enal/HNE, malonaldehyde and hexanal that form protein adducts and are highly cytotoxic. By participating for instance to the clearance of (E)-4-hydroxynon-2-enal/HNE in the lens epithelium prevents the formation of HNE-protein adducts and lens opacification. Also functions downstream of fructosamine-3-kinase in the fructosamine degradation pathway by catalyzing the oxidation of 3-deoxyglucosone, the carbohydrate product of fructosamine 3-phosphate decomposition, which is itself a potent glycating agent that may react with lysine and arginine side-chains of proteins. Also has an aminobutyraldehyde dehydrogenase activity and is probably part of an alternative pathway for the biosynthesis of GABA/4-aminobutanoate in midbrain, thereby playing a role in GABAergic synaptic transmission. This is Aldehyde dehydrogenase 1A1 from Equus caballus (Horse).